A 228-amino-acid polypeptide reads, in one-letter code: Urease accessory protein UreF (228 aa).

It belongs to the UreF family. UreD, UreF and UreG form a complex that acts as a GTP-hydrolysis-dependent molecular chaperone, activating the urease apoprotein by helping to assemble the nickel containing metallocenter of UreC. The UreE protein probably delivers the nickel.

The protein resides in the cytoplasm. Required for maturation of urease via the functional incorporation of the urease nickel metallocenter. This chain is Urease accessory protein UreF, found in Photorhabdus laumondii subsp. laumondii (strain DSM 15139 / CIP 105565 / TT01) (Photorhabdus luminescens subsp. laumondii).